Reading from the N-terminus, the 303-residue chain is Pseudouridine-5'-phosphate glycosidase (303 aa).

Glu-24 acts as the Proton donor in catalysis. Lys-85 and Val-105 together coordinate substrate. Asp-137 is a Mn(2+) binding site. 139-141 (SAD) lines the substrate pocket. Residue Lys-158 is the Nucleophile of the active site.

This sequence belongs to the pseudouridine-5'-phosphate glycosidase family. In terms of assembly, homotrimer. Mn(2+) is required as a cofactor.

The enzyme catalyses D-ribose 5-phosphate + uracil = psi-UMP + H2O. Functionally, catalyzes the reversible cleavage of pseudouridine 5'-phosphate (PsiMP) to ribose 5-phosphate and uracil. Functions biologically in the cleavage direction, as part of a pseudouridine degradation pathway. In Herpetosiphon aurantiacus (strain ATCC 23779 / DSM 785 / 114-95), this protein is Pseudouridine-5'-phosphate glycosidase.